Reading from the N-terminus, the 354-residue chain is Protein C42 (354 aa).

The Nuclear localization signal signature appears at 349–352 (KRKK).

Belongs to the baculoviridae C42 protein family.

It localises to the host nucleus. The protein is Protein C42 of Orgyia pseudotsugata (Douglas-fir tussock moth).